The following is a 642-amino-acid chain: Influenza virus NS1A-binding protein (642 aa).

The region spanning 1 to 131 is the BTB domain; the sequence is MIPNGYLMFE…GDYLLSRMDV (131 aa). Positions 132 to 350 constitute a BACK domain; the sequence is TSCISYRNFA…MQQDELIEKP (219 aa). Positions 164-368 are sufficient for AHR interaction and signaling; the sequence is ISEEEEFLKL…SGLGTAEMNG (205 aa). Phosphoserine is present on residues Ser246, Ser277, Ser322, Ser336, and Ser338. Residues 257-281 form a disordered region; that stretch reads KPPRENGHKQISSSSTGCLSSPNAT. The span at 265–281 shows a compositional bias: polar residues; that stretch reads KQISSSSTGCLSSPNAT. 6 Kelch repeats span residues 384-421, 432-469, 481-518, 527-565, 575-612, and 622-642; these read TVECYNPHTDHWSFLAPMRTPRARFQMAVLMGQLYVVG, CGEMYDSNIDDWIPVPELRTNRCNAGVCALNGKLYIVG, NCDVFDPVTKLWTSCAPLNIRRHQSAVCELGGYLYIIG, NTVERYNPENNTWTLIAPMNVARRGAGVAVLNGKLFVCG, CVEMYDPTRNEWKMMGNMTSPRSNAGIATVGNTIYAVG, and TVEVYNLESNEWSPYTKIFQF.

The protein belongs to the BTB-kelch protein family. As to quaternary structure, homodimer; through the BTB domain. Interacts with AHR/Aryl hydrocarbon receptor. Interacts (via BACK domain) with pre-mRNA-binding protein HNRNPK; the interaction is direct. Interacts (via BACK domain) with splicing factor PTBP1; the interaction is direct. Interacts (via Kelch repeats) with RNA polymerase POLR2A (via C-terminal domain). Interacts (via BACK domain) with splicing factor SNRPA; the interaction is indirect. Interacts (via Kelch repeats) with splicing factor SART1. Interacts (via BACK domain) with ALYREF; the interaction is indirect and likely plays a role in mRNA nuclear export. Interacts (via Kelch repeats) with KLHL20 (via Kelch repeats); this interaction blocks the assembly of Cul3-KLHL20 complex. In terms of assembly, (Microbial infection) Interacts (via BACK domain) with influenza A virus non-structural protein 1 (NS1); the interaction is direct and bridges the interaction between NS1 and HNRNPK.

It localises to the cytoplasm. It is found in the cytoskeleton. Its subcellular location is the nucleus. The protein localises to the nucleoplasm. Involved in many cell functions, including pre-mRNA splicing, the aryl hydrocarbon receptor (AHR) pathway, F-actin organization and protein ubiquitination. Plays a role in the dynamic organization of the actin skeleton as a stabilizer of actin filaments by association with F-actin through Kelch repeats. Protects cells from cell death induced by actin destabilization. Functions as modifier of the AHR/Aryl hydrocarbon receptor pathway increasing the concentration of AHR available to activate transcription. In addition, functions as a negative regulator of BCR(KLHL20) E3 ubiquitin ligase complex to prevent ubiquitin-mediated proteolysis of PML and DAPK1, two tumor suppressors. Inhibits pre-mRNA splicing (in vitro). May play a role in mRNA nuclear export. Functionally, (Microbial infection) Involved in the alternative splicing of influenza A virus M1 mRNA through interaction with HNRNPK, thereby facilitating the generation of viral M2 protein. The BTB and Kelch domains are required for splicing activity. Promotes export of viral M mRNA and RNP via its interaction with mRNA export factor ALYREF. This Homo sapiens (Human) protein is Influenza virus NS1A-binding protein.